A 232-amino-acid chain; its full sequence is Two-component response regulator ORR4 (232 aa).

The 137-residue stretch at 11-147 folds into the Response regulatory domain; the sequence is HVLAVDDSLI…DMKKLKSHLL (137 aa). 4-aspartylphosphate is present on D80. Disordered stretches follow at residues 153–174 and 202–232; these read LPMA…AASA and AAAM…AVET. The span at 209-232 shows a compositional bias: polar residues; sequence VISSPDQRTKPRLSSTSSGLAVET.

This sequence belongs to the ARR family. Type-A subfamily. Two-component system major event consists of a His-to-Asp phosphorelay between a sensor histidine kinase (HK) and a response regulator (RR). In plants, the His-to-Asp phosphorelay involves an additional intermediate named Histidine-containing phosphotransfer protein (HPt). This multistep phosphorelay consists of a His-Asp-His-Asp sequential transfer of a phosphate group between first a His and an Asp of the HK protein, followed by the transfer to a conserved His of the HPt protein and finally the transfer to an Asp in the receiver domain of the RR protein. As to expression, expressed in mature leaves and flowers, and at low levels in roots and shoots.

Its function is as follows. Functions as a response regulator involved in His-to-Asp phosphorelay signal transduction system. Phosphorylation of the Asp residue in the receiver domain activates the ability of the protein to promote the transcription of target genes. Type-A response regulators seem to act as negative regulators of the cytokinin signaling. The chain is Two-component response regulator ORR4 from Oryza sativa subsp. indica (Rice).